Consider the following 647-residue polypeptide: Probable squalene--hopene cyclase (647 aa).

One copy of the PFTB 1 repeat lies at 67–108 (EAKIGNYLRRTQGAHGGWPLVHDGPFDMSASVKSYFALKMIG). The active-site Proton donor is the D388. PFTB repeat units follow at residues 413–454 (IARG…GALL) and 530–577 (IRKA…ALLG).

Belongs to the terpene cyclase/mutase family.

It carries out the reaction squalene = hop-22(29)-ene. The enzyme catalyses squalene + H2O = hopan-22-ol. It functions in the pathway secondary metabolite biosynthesis; hopanoid biosynthesis. In terms of biological role, catalyzes the cyclization of squalene into hopene. Probably part of an operon y4aABCD involved in the synthesis of an isoprenoid compound. The polypeptide is Probable squalene--hopene cyclase (shc) (Sinorhizobium fredii (strain NBRC 101917 / NGR234)).